Here is a 282-residue protein sequence, read N- to C-terminus: DegV domain-containing protein spr1415 (282 aa).

Residues 3 to 280 (LAVFTDSSAY…AGSIALGYIP (278 aa)) form the DegV domain. 2 residues coordinate hexadecanoate: threonine 61 and serine 94.

In terms of biological role, may bind long-chain fatty acids, such as palmitate, and may play a role in lipid transport or fatty acid metabolism. This chain is DegV domain-containing protein spr1415, found in Streptococcus pneumoniae (strain ATCC BAA-255 / R6).